The following is a 290-amino-acid chain: Arylamine N-acetyltransferase 2 (290 aa).

Cysteine 68 serves as the catalytic Acyl-thioester intermediate. CoA-binding residues include serine 103 and glycine 104. Substrate is bound at residue 106–107; that stretch reads IH. Active-site residues include histidine 107 and aspartate 122. A CoA-binding site is contributed by tyrosine 208.

It belongs to the arylamine N-acetyltransferase family.

The protein resides in the cytoplasm. It catalyses the reaction an arylamine + acetyl-CoA = an N-acetylarylamine + CoA. It carries out the reaction an N-hydroxyarylamine + acetyl-CoA = an N-acetoxyarylamine + CoA. In terms of biological role, catalyzes the N- or O-acetylation of various arylamine and heterocyclic amine substrates, and participates in the detoxification of a plethora of hydrazine and arylamine drugs. In Mus musculus (Mouse), this protein is Arylamine N-acetyltransferase 2 (Nat2).